Here is a 543-residue protein sequence, read N- to C-terminus: MLVKPMACYFEIWTRKVTTIEDFSLAIANRFKQMGSHSDSEVDWDNEEEVWEDEVHEFCCLFCDSTFTCLKDLWSHCKEAHNFDFYQVKQQNNLDFYACIKLVNYIRSQVKEGKTPDLDKLSDILRSDEYMISVLPDDSVLFSLGDELDSDFEDDNTLEIEVENPADVSKDAEIKKLKLQNQLLISQLEEIRKDKMNELTSQTTDQLSVTPKKADNDSYYFESYAGNDIHFLMLNDSVRTEGYRDFVYHNKHIFAGKTVLDVGCGTGILSMFCAKAGAKKVYAVDNSDIIQMAISNAFENGLADQITFIRGKIEDISLPVGKVDIIISEWMGYALTFESMIDSVLVARDRFLAPSGIMAPSETRLVLTATTNTELLEEPIDFWSDVYGFKMNGMKDASYKGVSVQVVPQTYVNAKPVVFARFNMHTCKVQDVSFTSPFSLIIDNEGPLCAFTLWFDTYFTTKRTQPIPEAIDEACGFTTGPQGTPTHWKQCVLLLRNRPFLQKGTRVEGTISFSKNKKNNRDLDISVHWNVNGKADSQSYVLN.

The C2H2-type zinc-finger motif lies at 58–81; it reads FCCLFCDSTFTCLKDLWSHCKEAH. The SAM-dependent MTase PRMT-type domain maps to 217–543; the sequence is DSYYFESYAG…KADSQSYVLN (327 aa). The S-adenosyl-L-homocysteine site is built by R239, G263, D285, S287, I313, and E314. Catalysis depends on residues E329 and E338.

Belongs to the class I-like SAM-binding methyltransferase superfamily. Protein arginine N-methyltransferase family. As to quaternary structure, interacts with ef1a-c, rps2 and rps24. Note=Associates with the 40S ribosomal particle.

It localises to the cytoplasm. The protein localises to the cytosol. It catalyses the reaction L-arginyl-[protein] + S-adenosyl-L-methionine = N(omega)-methyl-L-arginyl-[protein] + S-adenosyl-L-homocysteine + H(+). The catalysed reaction is L-arginyl-[protein] + 2 S-adenosyl-L-methionine = N(omega),N(omega)-dimethyl-L-arginyl-[protein] + 2 S-adenosyl-L-homocysteine + 2 H(+). Methylates (mono and asymmetric dimethylation) the guanidino nitrogens of arginyl residues in ribosomal protein rps2. The sequence is that of Ribosomal protein arginine N-methyltransferase rmt3 (rmt3) from Schizosaccharomyces pombe (strain 972 / ATCC 24843) (Fission yeast).